The following is a 313-amino-acid chain: Porphobilinogen deaminase (313 aa).

C241 is modified (S-(dipyrrolylmethanemethyl)cysteine).

The protein belongs to the HMBS family. In terms of assembly, monomer. It depends on dipyrromethane as a cofactor.

The enzyme catalyses 4 porphobilinogen + H2O = hydroxymethylbilane + 4 NH4(+). Its pathway is porphyrin-containing compound metabolism; protoporphyrin-IX biosynthesis; coproporphyrinogen-III from 5-aminolevulinate: step 2/4. The protein operates within porphyrin-containing compound metabolism; chlorophyll biosynthesis. In terms of biological role, tetrapolymerization of the monopyrrole PBG into the hydroxymethylbilane pre-uroporphyrinogen in several discrete steps. The sequence is that of Porphobilinogen deaminase from Chlorobium phaeobacteroides (strain DSM 266 / SMG 266 / 2430).